A 508-amino-acid chain; its full sequence is MGLPWYRVHTVVLNDPGRLLSVHIMHTALVSGWAGSMALYELAVFDPSDPVLDPMWRQGMFVIPFMTRLGITNSWGGWSISGGTVTNPGIWSYEGVAGAHIVFSGLCFLAAIWHWVYWDLEIFCDERTGKPSLDLPKIFGIHLFLAGVACFGFGAFHVTGLYGPGIWVSDPYGLTGKVQAVNPVWGAEGFDPFVPGGIASHHIAAGTLGILAGLFHLSVRPPQRLYKGLRMGNIETVLSSSIAAVFFAAFVVAGTMWYGSATTPIELFGPTRYQWDQGYFQQEIYRRVSDGLAENLSLSEAWSKIPEKLAFYDYIGNNPAKGGLFRAGSMDNGDGIAVGWLGHPIFRDKEGRELFVRRMPTFFETFPVVLVDEEGIVRADVPFRRAESKYSVEQVGVTVEFYGGELNGVSYSDPATVKKYARRSQLGEIFELDRATLKSDGVFRSSPRGWFTFGHATFALLFFFGHIWHGARTLFRDVFAGIDPDLDAQVEFGTFQKVGDPTTRRQPV.

The next 6 helical transmembrane spans lie at 21-36 (SVHI…WAGS), 101-115 (IVFS…IWHW), 140-156 (GIHL…FGAF), 203-218 (IAAG…FHLS), 237-252 (VLSS…AFVV), and 457-472 (TFAL…HGAR).

The protein belongs to the PsbB/PsbC family. PsbB subfamily. PSII is composed of 1 copy each of membrane proteins PsbA, PsbB, PsbC, PsbD, PsbE, PsbF, PsbH, PsbI, PsbJ, PsbK, PsbL, PsbM, PsbT, PsbX, PsbY, PsbZ, Psb30/Ycf12, at least 3 peripheral proteins of the oxygen-evolving complex and a large number of cofactors. It forms dimeric complexes. Requires Binds multiple chlorophylls. PSII binds additional chlorophylls, carotenoids and specific lipids. as cofactor.

Its subcellular location is the plastid. The protein resides in the chloroplast thylakoid membrane. Functionally, one of the components of the core complex of photosystem II (PSII). It binds chlorophyll and helps catalyze the primary light-induced photochemical processes of PSII. PSII is a light-driven water:plastoquinone oxidoreductase, using light energy to abstract electrons from H(2)O, generating O(2) and a proton gradient subsequently used for ATP formation. This chain is Photosystem II CP47 reaction center protein, found in Oryza sativa subsp. indica (Rice).